The following is a 522-amino-acid chain: Glutamyl-tRNA(Gln) amidotransferase subunit A (522 aa).

Catalysis depends on charge relay system residues K88 and S163. S187 serves as the catalytic Acyl-ester intermediate.

The protein belongs to the amidase family. GatA subfamily. As to quaternary structure, heterotrimer of A, B and C subunits.

It catalyses the reaction L-glutamyl-tRNA(Gln) + L-glutamine + ATP + H2O = L-glutaminyl-tRNA(Gln) + L-glutamate + ADP + phosphate + H(+). Functionally, allows the formation of correctly charged Gln-tRNA(Gln) through the transamidation of misacylated Glu-tRNA(Gln) in organisms which lack glutaminyl-tRNA synthetase. The reaction takes place in the presence of glutamine and ATP through an activated gamma-phospho-Glu-tRNA(Gln). This chain is Glutamyl-tRNA(Gln) amidotransferase subunit A, found in Paenarthrobacter aurescens (strain TC1).